The primary structure comprises 223 residues: Endonuclease V (223 aa).

Asp-44 and Asp-109 together coordinate Mg(2+).

It belongs to the endonuclease V family. Mg(2+) is required as a cofactor.

Its subcellular location is the cytoplasm. The catalysed reaction is Endonucleolytic cleavage at apurinic or apyrimidinic sites to products with a 5'-phosphate.. In terms of biological role, DNA repair enzyme involved in the repair of deaminated bases. Selectively cleaves double-stranded DNA at the second phosphodiester bond 3' to a deoxyinosine leaving behind the intact lesion on the nicked DNA. In Methanothrix thermoacetophila (strain DSM 6194 / JCM 14653 / NBRC 101360 / PT) (Methanosaeta thermophila), this protein is Endonuclease V.